Reading from the N-terminus, the 109-residue chain is Small ribosomal subunit protein eS25z (109 aa).

The interval 1–36 is disordered; it reads MAPKKDKVPPPSSKPAKSGGGKQKKKKWSKGKQKEK. Positions 22-31 are enriched in basic residues; that stretch reads KQKKKKWSKG.

This sequence belongs to the eukaryotic ribosomal protein eS25 family.

In Arabidopsis thaliana (Mouse-ear cress), this protein is Small ribosomal subunit protein eS25z (RPS25A).